A 170-amino-acid polypeptide reads, in one-letter code: Translationally-controlled tumor protein homolog (170 aa).

One can recognise a TCTP domain in the interval Met-1–Val-170.

Belongs to the TCTP family.

Its subcellular location is the cytoplasm. The protein resides in the cytoskeleton. In terms of biological role, involved in protein synthesis. Involved in microtubule stabilization. The protein is Translationally-controlled tumor protein homolog of Neurospora crassa (strain ATCC 24698 / 74-OR23-1A / CBS 708.71 / DSM 1257 / FGSC 987).